We begin with the raw amino-acid sequence, 214 residues long: Probable nicotinate-nucleotide adenylyltransferase (214 aa).

It belongs to the NadD family.

The enzyme catalyses nicotinate beta-D-ribonucleotide + ATP + H(+) = deamido-NAD(+) + diphosphate. It functions in the pathway cofactor biosynthesis; NAD(+) biosynthesis; deamido-NAD(+) from nicotinate D-ribonucleotide: step 1/1. In terms of biological role, catalyzes the reversible adenylation of nicotinate mononucleotide (NaMN) to nicotinic acid adenine dinucleotide (NaAD). The chain is Probable nicotinate-nucleotide adenylyltransferase from Mycobacterium bovis (strain ATCC BAA-935 / AF2122/97).